Consider the following 240-residue polypeptide: Phosphoribosylaminoimidazole-succinocarboxamide synthase (240 aa).

It belongs to the SAICAR synthetase family.

The enzyme catalyses 5-amino-1-(5-phospho-D-ribosyl)imidazole-4-carboxylate + L-aspartate + ATP = (2S)-2-[5-amino-1-(5-phospho-beta-D-ribosyl)imidazole-4-carboxamido]succinate + ADP + phosphate + 2 H(+). It participates in purine metabolism; IMP biosynthesis via de novo pathway; 5-amino-1-(5-phospho-D-ribosyl)imidazole-4-carboxamide from 5-amino-1-(5-phospho-D-ribosyl)imidazole-4-carboxylate: step 1/2. This is Phosphoribosylaminoimidazole-succinocarboxamide synthase from Neorickettsia sennetsu (strain ATCC VR-367 / Miyayama) (Ehrlichia sennetsu).